A 1296-amino-acid polypeptide reads, in one-letter code: DNA-directed RNA polymerase subunit beta' (1296 aa).

Residues C60, C62, C75, and C78 each coordinate Zn(2+). Residues D535, D537, and D539 each contribute to the Mg(2+) site. The Zn(2+) site is built by C877, C954, C961, and C964.

Belongs to the RNA polymerase beta' chain family. As to quaternary structure, the RNAP catalytic core consists of 2 alpha, 1 beta, 1 beta' and 1 omega subunit. When a sigma factor is associated with the core the holoenzyme is formed, which can initiate transcription. Requires Mg(2+) as cofactor. Zn(2+) is required as a cofactor.

It catalyses the reaction RNA(n) + a ribonucleoside 5'-triphosphate = RNA(n+1) + diphosphate. DNA-dependent RNA polymerase catalyzes the transcription of DNA into RNA using the four ribonucleoside triphosphates as substrates. In Beutenbergia cavernae (strain ATCC BAA-8 / DSM 12333 / CCUG 43141 / JCM 11478 / NBRC 16432 / NCIMB 13614 / HKI 0122), this protein is DNA-directed RNA polymerase subunit beta'.